Here is a 119-residue protein sequence, read N- to C-terminus: Small ribosomal subunit protein bS6 (119 aa).

The interval 95–119 (AVTEPSPLAKGNEKREDRKESEDAE) is disordered. A compositionally biased stretch (basic and acidic residues) spans 105–119 (GNEKREDRKESEDAE).

Belongs to the bacterial ribosomal protein bS6 family.

Functionally, binds together with bS18 to 16S ribosomal RNA. The polypeptide is Small ribosomal subunit protein bS6 (Halorhodospira halophila (strain DSM 244 / SL1) (Ectothiorhodospira halophila (strain DSM 244 / SL1))).